The primary structure comprises 428 residues: C4-dicarboxylate transport protein (428 aa).

8 helical membrane passes run 8 to 28, 44 to 64, 78 to 98, 148 to 168, 184 to 204, 222 to 242, 307 to 327, and 355 to 375; these read VLYV…HYYP, LIKM…IAGM, LLYF…ATHI, GEIL…AHLG, VLFG…FGAM, LIGT…GAIA, IYMT…LTWM, and AATL…ILGI.

It belongs to the dicarboxylate/amino acid:cation symporter (DAACS) (TC 2.A.23) family.

The protein localises to the cell inner membrane. Its function is as follows. Responsible for the transport of dicarboxylates such as succinate, fumarate, and malate from the periplasm across the membrane. This Burkholderia mallei (strain ATCC 23344) protein is C4-dicarboxylate transport protein.